Consider the following 561-residue polypeptide: FAD-binding monooxygenase tazF (561 aa).

FAD is bound by residues T74–D77, D86–I87, and Y92. Residue G84–D86 coordinates NADP(+). NADP(+) contacts are provided by residues N212–Q218 and R235–H236.

It belongs to the FAD-binding monooxygenase family. FAD is required as a cofactor.

Its pathway is secondary metabolite biosynthesis. In terms of biological role, FAD-binding monooxygenase; part of the gene cluster that mediates the biosynthesis of azaterrilone A and other azaphilones, a class of fungal metabolites characterized by a highly oxygenated pyrano-quinone bicyclic core and exhibiting a broad range of bioactivities. The first step of the pathway begins with the non-reducing polyketide synthase tazA that assembles one acetyl-CoA starter unit, five malonyl-CoA units, and catalyzes a series of Claisen condensations, methylation, PT-mediated cyclization, and finally releases the first hexaketide precursor through the R-domain. The tazA product then undergoes reduction on its terminal ketone and the following pyran-ring formation by yet undetermined enzyme(s). Dehydration and enoyl reduction, possibly involving the trans-enoyl reductase tazE leads to the next intermediate. TazD is predicted as an acetyltransferase and might catalyze the acetylation steps leading to the synthesis of azaterrilone A. Azaterrilone A is not the final product of the taz pathway and both the highly reducing polyketide synthase tazB and the dual enzyme tazHJ catalyze late steps of the pathway, leading to the production of the 2 final stereoisomers that contain additional polyketide modification whose structures have still to be determined. The chain is FAD-binding monooxygenase tazF from Aspergillus terreus (strain NIH 2624 / FGSC A1156).